The primary structure comprises 217 residues: Adenylate kinase (217 aa).

Residue 10-15 (GAGKGT) participates in ATP binding. Residues 30-59 (STGDMFREAIKRGTPLGRQAEVYIKGGRLV) are NMP. AMP is bound by residues threonine 31, arginine 36, 57–59 (RLV), 85–88 (GFPR), and glutamine 92. Residues 126–163 (GRRVCRQCGATYHVRYNPPAVPGKCDACGQDLVQRADD) are LID. Residue arginine 127 coordinates ATP. Zn(2+) is bound by residues cysteine 130 and cysteine 133. 136–137 (TY) is a binding site for ATP. Zn(2+) contacts are provided by cysteine 150 and cysteine 153. Arginine 160 and arginine 171 together coordinate AMP. Glutamine 199 provides a ligand contact to ATP.

It belongs to the adenylate kinase family. Monomer.

The protein resides in the cytoplasm. It carries out the reaction AMP + ATP = 2 ADP. Its pathway is purine metabolism; AMP biosynthesis via salvage pathway; AMP from ADP: step 1/1. Its function is as follows. Catalyzes the reversible transfer of the terminal phosphate group between ATP and AMP. Plays an important role in cellular energy homeostasis and in adenine nucleotide metabolism. This chain is Adenylate kinase, found in Moorella thermoacetica (strain ATCC 39073 / JCM 9320).